A 391-amino-acid chain; its full sequence is MKKDTLLLIILILFCIVHVYGIYVHIYGINVSLENVSQYLYNTTVYLSYENGTPCFYIGEKKEFVIIPPYIKVDRDIAPLIKKLRFKIENKSYNLIITKKNVNTNKMAIIFTSINGSREVNGNKTIIWIKDPLKLKQSEVEALYELPEKGEVIARYKDGKPAAIKINNKIYVGFKPDEDVLANLIYIHIVKKTSNPLPYILFTVFLTLASLMLTFQETLKKKFLELISALASVKVFILSRINLLDEEKVLLNDTRREIYNYILDNPGCHLRELSKNLNKPVSTLTWHLRILEKANLIKSKKFGNRLIYYPADMDMRDLPLLYLKNETQKSIFEYLLKSPAHLRKIAKDLNLNVETVRYNLKKLENLGIVKSKEEGNRIVYYINESILKFHK.

The HTH arsR-type domain maps to 235–330; sequence VFILSRINLL…LYLKNETQKS (96 aa).

This is an uncharacterized protein from Methanocaldococcus jannaschii (strain ATCC 43067 / DSM 2661 / JAL-1 / JCM 10045 / NBRC 100440) (Methanococcus jannaschii).